Consider the following 272-residue polypeptide: HTH-type transcriptional repressor AllR (272 aa).

Positions 1–20 are disordered; it reads MTEVRRRGRPGQAEPTAQKG. An HTH iclR-type domain is found at 21–83; it reads AQALERGIAI…SQLGWWHIGL (63 aa). A DNA-binding region (H-T-H motif) is located at residues 43–62; sequence VSDISGSLDLPLSTTFRLLK. Residues 98–267 enclose the IclR-ED domain; sequence VLSVAGPFMH…AKDISTALGL (170 aa). Glyoxylate-binding positions include 154–156, D207, C217, and 234–236; these read SGA and SIS.

Functionally, negative regulator of allantoin and glyoxylate utilization operons. Binds to the gcl promoter and to the allS-allA intergenic region. The polypeptide is HTH-type transcriptional repressor AllR (allR) (Salmonella typhi).